The following is a 310-amino-acid chain: Quinolinate synthase (310 aa).

Iminosuccinate contacts are provided by H27 and S44. C89 lines the [4Fe-4S] cluster pocket. Residues 115–117 (YVN) and S132 each bind iminosuccinate. C175 lines the [4Fe-4S] cluster pocket. Residues 201–203 (HPE) and T222 contribute to the iminosuccinate site. Residue C267 participates in [4Fe-4S] cluster binding.

It belongs to the quinolinate synthase family. Type 2 subfamily. Requires [4Fe-4S] cluster as cofactor.

It is found in the cytoplasm. The enzyme catalyses iminosuccinate + dihydroxyacetone phosphate = quinolinate + phosphate + 2 H2O + H(+). The protein operates within cofactor biosynthesis; NAD(+) biosynthesis; quinolinate from iminoaspartate: step 1/1. Functionally, catalyzes the condensation of iminoaspartate with dihydroxyacetone phosphate to form quinolinate. In Thermus thermophilus (strain ATCC 27634 / DSM 579 / HB8), this protein is Quinolinate synthase.